Consider the following 353-residue polypeptide: Photosystem II protein D1 (353 aa).

N-acetylthreonine is present on Thr-2. Thr-2 is subject to Phosphothreonine. Helical transmembrane passes span 29–46 (YIGW…TATS), 118–133 (HFLL…EWEL), and 142–156 (WIAV…AATA). His-118 is a binding site for chlorophyll a. Tyr-126 provides a ligand contact to pheophytin a. Residues Asp-170 and Glu-189 each contribute to the [CaMn4O5] cluster site. A helical membrane pass occupies residues 197–218 (FHMLGVAGVFGGSLFSAMHGSL). His-198 is a chlorophyll a binding site. A quinone is bound by residues His-215 and 264 to 265 (SF). His-215 contributes to the Fe cation binding site. His-272 contributes to the Fe cation binding site. Residues 274 to 288 (FLAAWPVVGIWFTAL) traverse the membrane as a helical segment. Residues His-332, Glu-333, Asp-342, and Ala-344 each contribute to the [CaMn4O5] cluster site. The propeptide occupies 345-353 (AIEAPSTNG).

Belongs to the reaction center PufL/M/PsbA/D family. In terms of assembly, PSII is composed of 1 copy each of membrane proteins PsbA, PsbB, PsbC, PsbD, PsbE, PsbF, PsbH, PsbI, PsbJ, PsbK, PsbL, PsbM, PsbT, PsbX, PsbY, PsbZ, Psb30/Ycf12, at least 3 peripheral proteins of the oxygen-evolving complex and a large number of cofactors. It forms dimeric complexes. Requires The D1/D2 heterodimer binds P680, chlorophylls that are the primary electron donor of PSII, and subsequent electron acceptors. It shares a non-heme iron and each subunit binds pheophytin, quinone, additional chlorophylls, carotenoids and lipids. D1 provides most of the ligands for the Mn4-Ca-O5 cluster of the oxygen-evolving complex (OEC). There is also a Cl(-1) ion associated with D1 and D2, which is required for oxygen evolution. The PSII complex binds additional chlorophylls, carotenoids and specific lipids. as cofactor. Tyr-161 forms a radical intermediate that is referred to as redox-active TyrZ, YZ or Y-Z. In terms of processing, C-terminally processed by CTPA; processing is essential to allow assembly of the oxygen-evolving complex and thus photosynthetic growth.

It is found in the plastid. Its subcellular location is the chloroplast thylakoid membrane. The catalysed reaction is 2 a plastoquinone + 4 hnu + 2 H2O = 2 a plastoquinol + O2. Photosystem II (PSII) is a light-driven water:plastoquinone oxidoreductase that uses light energy to abstract electrons from H(2)O, generating O(2) and a proton gradient subsequently used for ATP formation. It consists of a core antenna complex that captures photons, and an electron transfer chain that converts photonic excitation into a charge separation. The D1/D2 (PsbA/PsbD) reaction center heterodimer binds P680, the primary electron donor of PSII as well as several subsequent electron acceptors. The polypeptide is Photosystem II protein D1 (Citrus sinensis (Sweet orange)).